The chain runs to 270 residues: Methionine-rich protein (270 aa).

Positions Met-1–Ala-18 are cleaved as a signal peptide. A compositionally biased stretch (polar residues) spans Gln-31–Ser-52. The segment at Gln-31–Pro-95 is disordered. The span at Pro-56 to Pro-95 shows a compositional bias: low complexity.

As to expression, component of the acid-soluble organic matrix of calcified layers of the shell (at protein level).

It is found in the secreted. The sequence is that of Methionine-rich protein from Lottia gigantea (Giant owl limpet).